Here is a 1023-residue protein sequence, read N- to C-terminus: Probable histidine kinase 3 (1023 aa).

Over 1–80 (MDEMSCGGGG…RGWRVVRETW (80 aa)) the chain is Cytoplasmic. A helical transmembrane segment spans residues 81–101 (WWVLLLWILAGSLGSFYLFLF). The Extracellular segment spans residues 102–387 (MNAQSLDKRR…CRFEKKPPWP (286 aa)). The 202-residue stretch at 151-352 (TPSAIDQMTF…TNESPISMYG (202 aa)) folds into the CHASE domain. Residues 388-408 (WLAITSSFGTLVIALLTGHIF) traverse the membrane as a helical segment. At 409 to 1023 (QATVHRIAKV…RFFQNHDQVE (615 aa)) the chain is on the cytoplasmic side. The region spanning 445–715 (TVSHEIRTPM…TFTFTAVLMR (271 aa)) is the Histidine kinase domain. H448 is modified (phosphohistidine; by autocatalysis). Response regulatory domains are found at residues 732-854 (NALV…RRAL) and 880-1016 (QIIV…ARFF). D783 carries the post-translational modification 4-aspartylphosphate. Positions 812-831 (LFLLGSSASSPKGGSDTSRE) are disordered. Positions 817–827 (SSASSPKGGSD) are enriched in polar residues. D930 is subject to 4-aspartylphosphate.

Activation probably requires a transfer of a phosphate group between a His in the transmitter domain and an Asp of the receiver domain. Highly expressed in young leaves and at lower levels in roots, mature leaves, stems and spikelets.

The protein resides in the cell membrane. It catalyses the reaction ATP + protein L-histidine = ADP + protein N-phospho-L-histidine.. In terms of biological role, cytokinin receptor related to bacterial two-component regulators. Functions as a histidine kinase and transmits the stress signal to a downstream MAPK cascade. In Oryza sativa subsp. japonica (Rice), this protein is Probable histidine kinase 3.